Consider the following 715-residue polypeptide: Polyribonucleotide nucleotidyltransferase (715 aa).

Mg(2+)-binding residues include Asp-493 and Asp-499. A KH domain is found at 560–619; sequence PRMITIKINPEKIRDVIGKGGSVIRALTEETGTTIDISDDGVVTIASTNSDGMAEAKKRI. One can recognise an S1 motif domain in the interval 629–697; sequence GQVYEGTVLK…EKGRVRLSAK (69 aa).

The protein belongs to the polyribonucleotide nucleotidyltransferase family. It depends on Mg(2+) as a cofactor.

The protein localises to the cytoplasm. The catalysed reaction is RNA(n+1) + phosphate = RNA(n) + a ribonucleoside 5'-diphosphate. Functionally, involved in mRNA degradation. Catalyzes the phosphorolysis of single-stranded polyribonucleotides processively in the 3'- to 5'-direction. In Burkholderia lata (strain ATCC 17760 / DSM 23089 / LMG 22485 / NCIMB 9086 / R18194 / 383), this protein is Polyribonucleotide nucleotidyltransferase.